Reading from the N-terminus, the 290-residue chain is Protein 3 (290 aa).

The protein is Protein 3 of Lettuce big-vein associated virus (isolate Japan/Kagawa) (LBVaV).